We begin with the raw amino-acid sequence, 388 residues long: Succinate--CoA ligase [ADP-forming] subunit beta (388 aa).

One can recognise an ATP-grasp domain in the interval 9–244; that stretch reads KSLFAEYGLP…PSQDDAREAH (236 aa). Residues Lys46, 53–55, Glu99, Thr102, and Glu107 each bind ATP; that span reads GRG. 2 residues coordinate Mg(2+): Asn199 and Asp213. Substrate-binding positions include Asn264 and 321–323; that span reads GIV.

It belongs to the succinate/malate CoA ligase beta subunit family. Heterotetramer of two alpha and two beta subunits. It depends on Mg(2+) as a cofactor.

It carries out the reaction succinate + ATP + CoA = succinyl-CoA + ADP + phosphate. It catalyses the reaction GTP + succinate + CoA = succinyl-CoA + GDP + phosphate. It participates in carbohydrate metabolism; tricarboxylic acid cycle; succinate from succinyl-CoA (ligase route): step 1/1. Succinyl-CoA synthetase functions in the citric acid cycle (TCA), coupling the hydrolysis of succinyl-CoA to the synthesis of either ATP or GTP and thus represents the only step of substrate-level phosphorylation in the TCA. The beta subunit provides nucleotide specificity of the enzyme and binds the substrate succinate, while the binding sites for coenzyme A and phosphate are found in the alpha subunit. The protein is Succinate--CoA ligase [ADP-forming] subunit beta of Shewanella putrefaciens (strain CN-32 / ATCC BAA-453).